Consider the following 123-residue polypeptide: Small ribosomal subunit protein bS16 (123 aa).

The tract at residues 87 to 123 (AKNNPIKAKPGKRAQERAAEKAQKAADAAAAAADAAE) is disordered. Basic and acidic residues predominate over residues 99 to 110 (RAQERAAEKAQK). Residues 111–123 (AADAAAAAADAAE) show a composition bias toward low complexity.

The protein belongs to the bacterial ribosomal protein bS16 family.

The chain is Small ribosomal subunit protein bS16 from Rhizobium etli (strain CIAT 652).